The sequence spans 287 residues: Putative glutamate--cysteine ligase regulatory subunit (287 aa).

It belongs to the aldo/keto reductase family. Glutamate--cysteine ligase light chain subfamily. As to quaternary structure, heterodimer of a catalytic heavy chain and a regulatory light chain.

The protein resides in the cytoplasm. It functions in the pathway sulfur metabolism; glutathione biosynthesis; glutathione from L-cysteine and L-glutamate: step 1/2. This Schizosaccharomyces pombe (strain 972 / ATCC 24843) (Fission yeast) protein is Putative glutamate--cysteine ligase regulatory subunit.